The sequence spans 429 residues: E3 ubiquitin-protein ligase ZNRF4 (429 aa).

The signal sequence occupies residues Met-1 to Ala-27. Topologically, residues Val-28–Pro-250 are lumenal. Residues Pro-30–Gln-64 form a disordered region. The span at Pro-37 to Pro-49 shows a compositional bias: basic residues. The N-linked (GlcNAc...) asparagine glycan is linked to Asn-152. The PA domain maps to Asn-152 to Arg-223. Residues Val-251–Val-271 traverse the membrane as a helical segment. The Cytoplasmic portion of the chain corresponds to Leu-272–Gln-429. The segment at Cys-309–Lys-352 adopts an RING-type; atypical zinc-finger fold. Disordered stretches follow at residues Thr-358–Pro-381 and Thr-409–Gln-429. Polar residues predominate over residues Thr-409–Ser-420.

Interacts with CANX.

It localises to the endoplasmic reticulum membrane. The catalysed reaction is S-ubiquitinyl-[E2 ubiquitin-conjugating enzyme]-L-cysteine + [acceptor protein]-L-lysine = [E2 ubiquitin-conjugating enzyme]-L-cysteine + N(6)-ubiquitinyl-[acceptor protein]-L-lysine.. It participates in protein modification; protein ubiquitination. Its function is as follows. E3 ubiquitin-protein ligase that acts as a negative regulator of NOD2 signaling by mediating ubiquitination and degradation of RIPK2. Also catalyzes ubiquitination and proteasomal degradation of CANX within the endoplasmic reticulum. Could have a role in spermatogenesis. This chain is E3 ubiquitin-protein ligase ZNRF4 (ZNRF4), found in Macaca fascicularis (Crab-eating macaque).